Here is a 1193-residue protein sequence, read N- to C-terminus: Sperm-associated antigen 5 (1193 aa).

The segment at 1–48 (MWRVKKLSLSLSPSPQTGKPSMRTPLRELTLQPGALTNSGKRSPACSS) is disordered. 5 positions are modified to phosphoserine: serine 12, serine 14, serine 43, serine 62, and serine 66. Residues 35–48 (ALTNSGKRSPACSS) are compositionally biased toward polar residues. Residues 96 to 117 (ESDEQPLDPIPQISSTPKTSEE) are disordered. Threonine 111 is modified (phosphothreonine; by GSK3-beta). Residues serine 135, serine 159, and serine 334 each carry the phosphoserine modification. At threonine 336 the chain carries Phosphothreonine. 3 positions are modified to phosphoserine: serine 341, serine 353, and serine 362. Residues 390 to 405 (PSAPQEKSTNTSQTGL) show a composition bias toward polar residues. The tract at residues 390 to 416 (PSAPQEKSTNTSQTGLVGTKHSTSETE) is disordered. The interval 482–850 (NKLQHLKESH…LKDTVENLTA (369 aa)) is interaction with KNSTRN. Coiled-coil stretches lie at residues 545–608 (CCFD…SMRE) and 759–868 (QLTQ…EKTR). Threonine 937 is subject to Phosphothreonine; by GSK3-beta. Serine 974 carries the post-translational modification Phosphoserine; by GSK3-beta. At threonine 978 the chain carries Phosphothreonine; by GSK3-beta. The stretch at 979 to 1174 (ELQSLCSLLQ…VQHIYKTLLS (196 aa)) forms a coiled coil.

Homodimer, with a globular head domain and a long stalk. Homooligomer; the globular head domains associate, resulting in aster-like structures. Binds to microtubules in the mitotic spindle. Interacts with DCLRE1B/Apollo. Part of an astrin (SPAG5)-kinastrin (SKAP) complex containing KNSTRN, SPAG5, PLK1, DYNLL1 and SGO2. Interacts with KNSTRN. Interacts with RPTOR; this interaction competes with RPTOR binding to MTOR, resulting in decreased mTORC1 formation. Interacts with G3BP1. The complex formed with G3BP1 AND RPTOR is increased by oxidative stress. Interacts with OSBPL8, PCM1 and CDK5RAP2. Interacts (via C-terminus) with NUMA1 (via C-terminus); this interaction promotes the recruitment of SPAG5 to the microtubules at spindle poles in a dynein-dynactin-dependent manner. Interacts with DYNLL1. In terms of processing, phosphorylated by AURKA. Highly expressed in testis. Detected at low levels in placenta, liver, pancreas, thymus and colon.

The protein localises to the cytoplasm. It localises to the cytoskeleton. The protein resides in the spindle. Its subcellular location is the spindle pole. It is found in the chromosome. The protein localises to the centromere. It localises to the kinetochore. The protein resides in the midbody. Its subcellular location is the microtubule organizing center. It is found in the centrosome. The protein localises to the cytoplasmic granule. It localises to the centriolar satellite. Essential component of the mitotic spindle required for normal chromosome segregation and progression into anaphase. Required for chromosome alignment, normal timing of sister chromatid segregation, and maintenance of spindle pole architecture. In complex with SKAP, promotes stable microtubule-kinetochore attachments. May contribute to the regulation of separase activity. May regulate AURKA localization to mitotic spindle, but not to centrosomes and CCNB1 localization to both mitotic spindle and centrosomes. Involved in centriole duplication. Required for CDK5RAP2, CEP152, WDR62 and CEP63 centrosomal localization and promotes the centrosomal localization of CDK2. In non-mitotic cells, upon stress induction, inhibits mammalian target of rapamycin complex 1 (mTORC1) association and recruits the mTORC1 component RPTOR to stress granules (SGs), thereby preventing mTORC1 hyperactivation-induced apoptosis. May enhance GSK3B-mediated phosphorylation of other substrates, such as MAPT/TAU. This chain is Sperm-associated antigen 5 (SPAG5), found in Homo sapiens (Human).